A 140-amino-acid chain; its full sequence is Probable glycine cleavage system H protein 3 (140 aa).

The Lipoyl-binding domain maps to 29–110; sequence VVSIGVTDLG…PYDSWIVKIR (82 aa). Lys70 is subject to N6-lipoyllysine.

It belongs to the GcvH family. The glycine cleavage system is composed of four proteins: P, T, L and H. The cofactor is (R)-lipoate.

In terms of biological role, the glycine cleavage system catalyzes the degradation of glycine. The H protein shuttles the methylamine group of glycine from the P protein to the T protein. The polypeptide is Probable glycine cleavage system H protein 3 (Saccharolobus solfataricus (strain ATCC 35092 / DSM 1617 / JCM 11322 / P2) (Sulfolobus solfataricus)).